A 149-amino-acid chain; its full sequence is Arginine repressor (149 aa).

Belongs to the ArgR family.

It localises to the cytoplasm. It participates in amino-acid biosynthesis; L-arginine biosynthesis [regulation]. Regulates arginine biosynthesis genes. The sequence is that of Arginine repressor from Bacillus mycoides (strain KBAB4) (Bacillus weihenstephanensis).